The sequence spans 167 residues: Zymogen granule membrane protein 16 (167 aa).

Residues 1–16 form the signal peptide; sequence MLAVALLVLLCASASA. A Jacalin-type lectin domain is found at 24–159; that stretch reads SSYSGEYGGK…IDSISLHWDT (136 aa).

Belongs to the jacalin lectin family.

It is found in the secreted. The protein resides in the extracellular space. It localises to the extracellular matrix. The protein localises to the zymogen granule lumen. Its subcellular location is the golgi apparatus lumen. In terms of biological role, may play a role in protein trafficking. May act as a linker molecule between the submembranous matrix on the luminal side of zymogen granule membrane (ZGM) and aggregated secretory proteins during granule formation in the TGN. The protein is Zymogen granule membrane protein 16 (Zg16) of Mus musculus (Mouse).